An 84-amino-acid chain; its full sequence is uncharacterized protein (84 aa).

This is an uncharacterized protein from Methanocaldococcus jannaschii (strain ATCC 43067 / DSM 2661 / JAL-1 / JCM 10045 / NBRC 100440) (Methanococcus jannaschii).